The sequence spans 256 residues: tRNA-cytidine(32) 2-sulfurtransferase (256 aa).

The PP-loop motif signature appears at 35 to 40 (SGGKDS). [4Fe-4S] cluster is bound by residues cysteine 110, cysteine 113, and cysteine 201.

It belongs to the TtcA family. As to quaternary structure, homodimer. The cofactor is Mg(2+). It depends on [4Fe-4S] cluster as a cofactor.

The protein localises to the cytoplasm. It catalyses the reaction cytidine(32) in tRNA + S-sulfanyl-L-cysteinyl-[cysteine desulfurase] + AH2 + ATP = 2-thiocytidine(32) in tRNA + L-cysteinyl-[cysteine desulfurase] + A + AMP + diphosphate + H(+). The protein operates within tRNA modification. Catalyzes the ATP-dependent 2-thiolation of cytidine in position 32 of tRNA, to form 2-thiocytidine (s(2)C32). The sulfur atoms are provided by the cysteine/cysteine desulfurase (IscS) system. This Coxiella burnetii (strain Dugway 5J108-111) protein is tRNA-cytidine(32) 2-sulfurtransferase.